Here is a 176-residue protein sequence, read N- to C-terminus: Probable inosine/xanthosine triphosphatase (176 aa).

Asp36 lines the Mg(2+) pocket.

The protein belongs to the YjjX NTPase family. As to quaternary structure, homodimer. It depends on Mg(2+) as a cofactor. Requires Mn(2+) as cofactor.

It catalyses the reaction XTP + H2O = XDP + phosphate + H(+). It carries out the reaction ITP + H2O = IDP + phosphate + H(+). Functionally, phosphatase that hydrolyzes non-canonical purine nucleotides such as XTP and ITP to their respective diphosphate derivatives. Probably excludes non-canonical purines from DNA/RNA precursor pool, thus preventing their incorporation into DNA/RNA and avoiding chromosomal lesions. The chain is Probable inosine/xanthosine triphosphatase from Saccharolobus solfataricus (strain ATCC 35092 / DSM 1617 / JCM 11322 / P2) (Sulfolobus solfataricus).